The chain runs to 198 residues: Ribonuclease HII (198 aa).

Positions 10–198 (QLVAGVDEVG…PVKRALGLAS (189 aa)) constitute an RNase H type-2 domain. A divalent metal cation-binding residues include Asp16, Glu17, and Asp108.

This sequence belongs to the RNase HII family. Mn(2+) serves as cofactor. Requires Mg(2+) as cofactor.

It is found in the cytoplasm. The catalysed reaction is Endonucleolytic cleavage to 5'-phosphomonoester.. In terms of biological role, endonuclease that specifically degrades the RNA of RNA-DNA hybrids. The sequence is that of Ribonuclease HII from Shigella boydii serotype 4 (strain Sb227).